Reading from the N-terminus, the 841-residue chain is Toll-like receptor 4 (841 aa).

The signal sequence occupies residues 1 to 23 (MIPRIRLAVATIPAMAFLSCLRS). Residues 24-632 (ESWDPCVQVV…FRNATCQISE (609 aa)) are Extracellular-facing. A disulfide bridge connects residues C29 and C40. An N-linked (GlcNAc...) asparagine glycan is attached at N35. LRR repeat units lie at residues 55–76 (SVKI…SFSS), 79–100 (ELQV…AYQG), 103–124 (YLST…AFSG), 127–148 (SLQK…PIGH), 151–172 (TLNE…EYFS), 176–197 (NLEH…HLQV), and 205–225 (NLSL…AFNK). N-linked (GlcNAc...) asparagine glycans are attached at residues N205, N238, N282, and N309. A disulfide bridge links C281 with C306. LRR repeat units follow at residues 374 to 395 (NLQF…SHNE), 400 to 422 (KLKH…MGLE), 423 to 444 (QLEY…SIFL), 448 to 469 (NLHY…IFAG), 472 to 495 (SLQT…FTDL), 497 to 518 (NLIL…AFHS), 521 to 542 (RLQV…PYKP), and 545 to 568 (SLRI…QHLP). A disulfide bond links C390 and C391. N526 is a glycosylation site (N-linked (GlcNAc...) asparagine). N575 is a glycosylation site (N-linked (GlcNAc...) asparagine). The LRRCT domain maps to 579–630 (NDFSCACEHQTFLQWVKDQKQLLVGAEQMVCTQPLEMQDLPVLSFRNATCQI). Disulfide bonds link C583/C609 and C585/C628. The N-linked (GlcNAc...) asparagine glycan is linked to N625. A helical transmembrane segment spans residues 633 to 653 (AVISASVLTFLLVSVAGILVY). The Cytoplasmic portion of the chain corresponds to 654–841 (KFYFHLLLFV…SNQHDTTAFT (188 aa)). The TIR domain maps to 673-816 (STYDAFVIYS…IFWRRLKKAL (144 aa)).

This sequence belongs to the Toll-like receptor family. Belongs to the lipopolysaccharide (LPS) receptor, a multi-protein complex containing at least CD14, LY96 and TLR4. Binding to bacterial LPS leads to homodimerization. Interacts with LY96 via the extracellular domain. Interacts with MYD88 and TIRAP via their respective TIR domains. Interacts with NOX4. Interacts with CNPY3 and HSP90B1; this interaction is required for proper folding in the endoplasmic reticulum. Interacts with MAP3K21; this interaction leads to negative regulation of TLR4 signaling. Interacts with CD36, following CD36 stimulation by oxLDL or amyloid-beta 42, and forms a heterodimer with TLR6. The trimeric complex is internalized and triggers inflammatory response. LYN kinase activity facilitates TLR4-TLR6 heterodimerization and signal initiation. Interacts with TICAM1 in response to LPS in a WDFY1-dependent manner. Interacts with WDFY1 in response to LPS. Interacts with SMPDL3B. Interacts with CEACAM1; upon lipopolysaccharide stimulation, forms a complex including TLR4 and the phosphorylated form of SYK and CEACAM1, which in turn, recruits PTPN6 that dephosphorylates SYK, reducing the production of reactive oxygen species (ROS) and lysosome disruption, which in turn, reduces the activity of the inflammasome. Interacts with RFTN1; the interaction occurs in response to lipopolysaccharide stimulation. Interacts with SCIMP; the interaction occurs in response to lipopolysaccharide stimulation and is enhanced by phosphorylation of SCIMP by LYN. This interaction facilitates the phosphorylation of TLR4 by LYN which elicits a selective cytokine response in macrophages. Interacts with TRAF3IP3. Interacts with TREM1; this interaction enhances TLR4-mediated inflammatory response. Interacts with ZG16B/PAUF. Interacts with CD82; this interaction inhibits TLR4-mediated signaling pathway. Phosphorylated on tyrosine residues by LYN after binding lipopolysaccharide. In terms of processing, ubiquitinated by RNF128 via 'Lys-28'-linked polyubiquitin chains, leading to proteasomal degradation.

It localises to the cell membrane. The protein resides in the early endosome. It is found in the cell projection. Its subcellular location is the ruffle. Transmembrane receptor that functions as a pattern recognition receptor recognizing pathogen- and damage-associated molecular patterns (PAMPs and DAMPs) to induce innate immune responses via downstream signaling pathways. At the plasma membrane, cooperates with LY96 to mediate the innate immune response to bacterial lipopolysaccharide (LPS). Also involved in LPS-independent inflammatory responses triggered by free fatty acids, such as palmitate, and Ni(2+). Mechanistically, acts via MYD88, TIRAP and TRAF6, leading to NF-kappa-B activation, cytokine secretion and the inflammatory response. Alternatively, CD14-mediated TLR4 internalization via endocytosis is associated with the initiation of a MYD88-independent signaling via the TICAM1-TBK1-IRF3 axis leading to type I interferon production. In addition to the secretion of proinflammatory cytokines, initiates the activation of NLRP3 inflammasome and formation of a positive feedback loop between autophagy and NF-kappa-B signaling cascade. In complex with TLR6, promotes inflammation in monocytes/macrophages by associating with TLR6 and the receptor CD86. Upon ligand binding, such as oxLDL or amyloid-beta 42, the TLR4:TLR6 complex is internalized and triggers inflammatory response, leading to NF-kappa-B-dependent production of CXCL1, CXCL2 and CCL9 cytokines, via MYD88 signaling pathway, and CCL5 cytokine, via TICAM1 signaling pathway. In myeloid dendritic cells, vesicular stomatitis virus glycoprotein G but not LPS promotes the activation of IRF7, leading to type I IFN production in a CD14-dependent manner. The polypeptide is Toll-like receptor 4 (TLR4) (Sus scrofa (Pig)).